Consider the following 195-residue polypeptide: Transcription repressor OFP17 (195 aa).

The OVATE domain occupies 130-190; the sequence is EDNAVEDACR…SRFYGELCRD (61 aa).

The protein resides in the nucleus. In terms of biological role, transcriptional repressor that may regulate multiple aspects of plant growth and development through the regulation of BEL1-LIKE (BLH) and KNOX TALE (KNAT) homeodomain transcription factors. The sequence is that of Transcription repressor OFP17 (OFP17) from Arabidopsis thaliana (Mouse-ear cress).